The following is a 203-amino-acid chain: Urease accessory protein UreG (203 aa).

Position 11–18 (11–18 (GPVGSGKT)) interacts with GTP.

This sequence belongs to the SIMIBI class G3E GTPase family. UreG subfamily. Homodimer. UreD, UreF and UreG form a complex that acts as a GTP-hydrolysis-dependent molecular chaperone, activating the urease apoprotein by helping to assemble the nickel containing metallocenter of UreC. The UreE protein probably delivers the nickel.

Its subcellular location is the cytoplasm. Facilitates the functional incorporation of the urease nickel metallocenter. This process requires GTP hydrolysis, probably effectuated by UreG. This chain is Urease accessory protein UreG, found in Prochlorococcus marinus (strain MIT 9312).